The sequence spans 660 residues: MQENLRFASSGDDIKIWDASSMTLVDKFNPHTSPHGISSICWSSNNNFLVTASSSGDKIVVSSCKCKPVPLLELAEGQKQTCVNLNSTSMYLVSGGLNNTVNIWDLKSKRVHRSLKDHKDQVTCVTYNWNDCYIASGSLSGEIILHSVTTNLSSTPFGHGSNQSVRHLKYSLFKKSLLGSVSDNGIVTLWDVNSQSPYHNFDSVHKAPASGICFSPVNELLFVTIGLDKRIILYDTSSKKLVKTLVADTPLTAVDFMPDGATLAIGSSRGKIYQYDLRMLKSPVKTISAHKTSVQCIAFQYSTVLTKSSLNKGCSNKPTTVNKRSVNVNAASGGVQNSGIVREAPATSIATVLPQPMTSAMGKGTVAVQEKAGLPRSINTDTLSKETDSGKNQDFSSFDDTGKSSLGDMFSPIRDDAVVNKGSDESIGKGDGFDFLPQLNSVFPPRKNPVTSSTSVLHSSPLNVFMGSPGKEENENRDLTAESKKIYMGKQESKDSFKQLAKLVTSGAESGNLNTSPSSNQTRNSEKFEKPENEIEAQLICEPPINGSSTPNPKIASSVTAGVASSLSEKIADSIGNNRQNAPLTSIQIRFIQNMIQETLDDFREACHRDIVNLQVEMIKQFHMQLNEMHSLLERYSVNEGLVAEIERLREENKRLRAHF.

8 WD repeats span residues 1 to 31 (MQEN…FNPH), 32 to 71 (TSPH…PVPL), 75 to 114 (AEGQ…VHRS), 117 to 156 (DHKD…SSTP), 160 to 200 (GSNQ…PYHN), 204 to 244 (VHKA…LVKT), 246 to 285 (VADT…SPVK), and 289 to 332 (AHKT…NAAS). Residue Ser-325 is modified to Phosphoserine. Residues 369-411 (QEKAGLPRSINTDTLSKETDSGKNQDFSSFDDTGKSSLGDMFS) are disordered. Thr-382 is subject to Phosphothreonine; by PLK1. Position 397 is a phosphoserine; by PLK1 (Ser-397). Ser-411 carries the phosphoserine modification. The residue at position 426 (Ser-426) is a Phosphoserine; by PLK1. 2 positions are modified to phosphoserine: Ser-468 and Ser-516. Positions 507-523 (GAESGNLNTSPSSNQTR) are enriched in polar residues. A disordered region spans residues 507-532 (GAESGNLNTSPSSNQTRNSEKFEKPE). A Phosphothreonine; by CDK1 modification is found at Thr-550. A Phosphoserine; by PLK1 modification is found at Ser-637.

As to quaternary structure, interacts with FAM29A. Interacts with HSPA1A and HSPA1B. Interacts with gamma-tubulin in a HSPA1A/B-dependent manner. In terms of processing, during mitosis, prior phosphorylation on Thr-550 by CDK1 promotes subsequent phosphorylation by PLK1 on Thr-382, Ser-397, Ser-426 and Ser-637. Phosphorylated NEDD1 can interact with gamma-tubulin for targeting the gamma-tubulin ring complex (gTuRC) to the centrosome, an important step for spindle formation.

It localises to the cytoplasm. Its subcellular location is the cytoskeleton. The protein resides in the microtubule organizing center. It is found in the centrosome. Its function is as follows. Required for mitosis progression. Promotes the nucleation of microtubules from the spindle. In Homo sapiens (Human), this protein is Protein NEDD1 (NEDD1).